We begin with the raw amino-acid sequence, 204 residues long: Recombination protein RecR (204 aa).

The C4-type zinc-finger motif lies at 58–75 (CSICQNVTDRGDDPCSIC). Residues 83-181 (SKICVVESPP…EVTKIARGIP (99 aa)) form the Toprim domain.

Belongs to the RecR family.

In terms of biological role, may play a role in DNA repair. It seems to be involved in an RecBC-independent recombinational process of DNA repair. It may act with RecF and RecO. This Chlorobium phaeobacteroides (strain BS1) protein is Recombination protein RecR.